A 185-amino-acid polypeptide reads, in one-letter code: Protein C2-DOMAIN ABA-RELATED 9 (185 aa).

Positions 1–104 (MEDKPLGILR…LEAHQMELDF (104 aa)) constitute a C2 domain. Residues R22, D23, D28, D74, K75, D76, and D82 each contribute to the Ca(2+) site.

The protein belongs to the plant CAR protein family. In terms of assembly, binds to PYR/PYL/RCAR abscisic acid intracellular receptors in an ABA-independent manner, both at the plasma membrane and in the nucleus. Interacts with LOT1 in the nuleus; this interaction is repressed by abscisic acid (ABA) and is sensitive to calcium ion Ca(2+), leading to free CAR9 accumulation at the plasma membrane. Ca(2+) serves as cofactor.

Its subcellular location is the cell membrane. The protein localises to the nucleus. In terms of biological role, stimulates the GTPase/ATPase activities of Obg-like ATPases. Mediates the transient calcium-dependent interaction of PYR/PYL/RCAR abscisic acid (ABA) receptors with the plasma membrane and thus regulates ABA sensitivity. The protein is Protein C2-DOMAIN ABA-RELATED 9 of Arabidopsis thaliana (Mouse-ear cress).